The chain runs to 130 residues: Small ribosomal subunit protein uS8 (130 aa).

The protein belongs to the universal ribosomal protein uS8 family.

This Paracentrotus lividus (Common sea urchin) protein is Small ribosomal subunit protein uS8 (RPS15A).